A 101-amino-acid chain; its full sequence is NAD(P)H-quinone oxidoreductase subunit 4L, chloroplastic (101 aa).

The next 3 membrane-spanning stretches (helical) occupy residues 2–22, 32–52, and 61–81; these read ILEH…YGLI, MCLE…SDFF, and IFSI…LAIV.

It belongs to the complex I subunit 4L family. As to quaternary structure, NDH is composed of at least 16 different subunits, 5 of which are encoded in the nucleus.

It is found in the plastid. The protein localises to the chloroplast thylakoid membrane. The catalysed reaction is a plastoquinone + NADH + (n+1) H(+)(in) = a plastoquinol + NAD(+) + n H(+)(out). The enzyme catalyses a plastoquinone + NADPH + (n+1) H(+)(in) = a plastoquinol + NADP(+) + n H(+)(out). NDH shuttles electrons from NAD(P)H:plastoquinone, via FMN and iron-sulfur (Fe-S) centers, to quinones in the photosynthetic chain and possibly in a chloroplast respiratory chain. The immediate electron acceptor for the enzyme in this species is believed to be plastoquinone. Couples the redox reaction to proton translocation, and thus conserves the redox energy in a proton gradient. This is NAD(P)H-quinone oxidoreductase subunit 4L, chloroplastic from Oenothera argillicola (Appalachian evening primrose).